A 744-amino-acid chain; its full sequence is Protein pthb1 homolog (744 aa).

Positions 722–733 are enriched in basic and acidic residues; that stretch reads EHSPKELPKIRE. Residues 722-744 are disordered; the sequence is EHSPKELPKIREEEEEEEQQVTA. A compositionally biased stretch (acidic residues) spans 734–744; the sequence is EEEEEEQQVTA.

Part of BBSome complex, that contains bbs-1, bbs-2, bbs-4, bbs-5, osm-12, bbs-8/ttc-8 and bbs-9. Interacts with bbs-1.

Component of the BBSome complex. The BBSome complex is thought to function as a coat complex required for sorting of specific membrane proteins to the primary cilia. The BBSome complex is required for ciliogenesis but is dispensable for centriolar satellite function. Required for proper BBSome complex assembly and its ciliary localization. Required for cilia biogenesis and both the assembly and movement of intraflagellar transport proteins along the ciliary axoneme. In ciliated sensory neurons, required for the sensation of nitric oxide and avoidance of NO-producing organisms like P.aeruginosa. The sequence is that of Protein pthb1 homolog from Caenorhabditis elegans.